A 169-amino-acid chain; its full sequence is Copper-resistant cuproprotein CopI (169 aa).

An N-terminal signal peptide occupies residues 1–20 (MIKKTLLVIALTFTVTTAFA). Residues histidine 98, cysteine 153, histidine 158, and methionine 163 each coordinate Cu(2+).

Belongs to the CopI family.

The protein localises to the periplasm. Functionally, involved in copper tolerance. Mediates copper tolerance in aerobiosis. May also mediate tolerance under anaerobiosis. Not required for virulence or colonization in the mouse model. In Vibrio cholerae serotype O1 (strain ATCC 39315 / El Tor Inaba N16961), this protein is Copper-resistant cuproprotein CopI.